The following is a 283-amino-acid chain: Nickel/cobalt efflux system RcnA (283 aa).

The Periplasmic segment spans residues 1–5 (MGEFS). A helical membrane pass occupies residues 6 to 26 (ILLQQGNGWFFIPSAILLGIL). Residues 27 to 51 (HGLEPGHSKTMMAAFIIAIKGTIKQ) are Cytoplasmic-facing. A helical transmembrane segment spans residues 52 to 72 (AFMLGLAATLSHTAVVWLIAL). Residues 73–85 (GGMYLSRAYAAES) are Periplasmic-facing. The helical transmembrane segment at 86–106 (VEPWLQLISAIIILGTACWMF) threads the bilayer. Topologically, residues 107-183 (WRTWRGEQQW…FHGQKVTNEQ (77 aa)) are cytoplasmic. Over residues 120 to 148 (SHHDHDHDHDHDHDHDHDHDHDHDHHGHT) the composition is skewed to basic and acidic residues. Residues 120–149 (SHHDHDHDHDHDHDHDHDHDHDHDHHGHTY) form a disordered region. Residues 184-204 (ILLFGLTGGLIPCPAAITLLL) form a helical membrane-spanning segment. Residues 205-218 (ICIQLQALTLGATM) are Periplasmic-facing. The chain crosses the membrane as a helical span at residues 219–239 (VLCFSLGLALTLVAVGVGAAI). The Cytoplasmic segment spans residues 240 to 260 (SVQQAVKRWNGFTTLARRAPY). A helical membrane pass occupies residues 261 to 281 (FSSILIGLVGLYMGIHGYTGI). Over 282–283 (MQ) the chain is Periplasmic.

The protein belongs to the NiCoT transporter (TC 2.A.52) family. RcnA subfamily.

It is found in the cell inner membrane. Efflux system for nickel and cobalt. This Salmonella arizonae (strain ATCC BAA-731 / CDC346-86 / RSK2980) protein is Nickel/cobalt efflux system RcnA (rcnA).